Reading from the N-terminus, the 285-residue chain is NADPH-dependent 7-cyano-7-deazaguanine reductase (285 aa).

Residue 80 to 82 (VES) coordinates substrate. An NADPH-binding site is contributed by 82–83 (SK). Catalysis depends on cysteine 191, which acts as the Thioimide intermediate. The active-site Proton donor is the aspartate 198. Residue 231-232 (HE) participates in substrate binding. 260-261 (RG) contacts NADPH.

The protein belongs to the GTP cyclohydrolase I family. QueF type 2 subfamily. Homodimer.

The protein resides in the cytoplasm. The catalysed reaction is 7-aminomethyl-7-carbaguanine + 2 NADP(+) = 7-cyano-7-deazaguanine + 2 NADPH + 3 H(+). It functions in the pathway tRNA modification; tRNA-queuosine biosynthesis. Catalyzes the NADPH-dependent reduction of 7-cyano-7-deazaguanine (preQ0) to 7-aminomethyl-7-deazaguanine (preQ1). The polypeptide is NADPH-dependent 7-cyano-7-deazaguanine reductase (Psychrobacter arcticus (strain DSM 17307 / VKM B-2377 / 273-4)).